The chain runs to 231 residues: Nucleoside diphosphate kinase II, chloroplastic (231 aa).

Residues 1 to 62 (MVGATVVSKW…RNSASRRRLR (62 aa)) constitute a chloroplast transit peptide. ATP is bound by residues Lys-91, Phe-139, Arg-167, Thr-173, Arg-184, and Asn-194. The active-site Pros-phosphohistidine intermediate is His-197.

This sequence belongs to the NDK family. In terms of assembly, interacts with PHYA, MPK3 and MPK6. Requires Mg(2+) as cofactor. Post-translationally, autophosphorylated.

The protein resides in the plastid. The protein localises to the chloroplast. The catalysed reaction is a 2'-deoxyribonucleoside 5'-diphosphate + ATP = a 2'-deoxyribonucleoside 5'-triphosphate + ADP. It carries out the reaction a ribonucleoside 5'-diphosphate + ATP = a ribonucleoside 5'-triphosphate + ADP. Major role in the synthesis of nucleoside triphosphates other than ATP. The ATP gamma phosphate is transferred to the NDP beta phosphate via a ping-pong mechanism, using a phosphorylated active-site intermediate. May activate MPK3 and MPK6. May be involved in the regulation of cellular redox state and hydrogen peroxide-mediated MAP kinase signaling. In Arabidopsis thaliana (Mouse-ear cress), this protein is Nucleoside diphosphate kinase II, chloroplastic (NDPK2).